A 214-amino-acid polypeptide reads, in one-letter code: MISSLRGTVLSVSGQTLLLEVHGVGYGVSVTPRHALELRNGSEATVLTSLVVREDSLTLFGFPGPDELRAFELLCGVTGVGPKSALAVLEHLDPEAMAQAVAAEDDAAFRRVSGIGPKTAKLIVLQLAGKLFVTQPRARSATSAASTVTADVVTALIGLGWSERVARTAVDDAAAAAADQGLPADMPRLLRVALGMLGPQQPAGAAPTGQAADR.

Residues 1–63 (MISSLRGTVL…EDSLTLFGFP (63 aa)) form a domain I region. Residues 64–139 (GPDELRAFEL…KLFVTQPRAR (76 aa)) are domain II. The interval 139-143 (RSATS) is flexible linker. The domain III stretch occupies residues 144 to 214 (AASTVTADVV…AAPTGQAADR (71 aa)).

Belongs to the RuvA family. Homotetramer. Forms an RuvA(8)-RuvB(12)-Holliday junction (HJ) complex. HJ DNA is sandwiched between 2 RuvA tetramers; dsDNA enters through RuvA and exits via RuvB. An RuvB hexamer assembles on each DNA strand where it exits the tetramer. Each RuvB hexamer is contacted by two RuvA subunits (via domain III) on 2 adjacent RuvB subunits; this complex drives branch migration. In the full resolvosome a probable DNA-RuvA(4)-RuvB(12)-RuvC(2) complex forms which resolves the HJ.

Its subcellular location is the cytoplasm. The RuvA-RuvB-RuvC complex processes Holliday junction (HJ) DNA during genetic recombination and DNA repair, while the RuvA-RuvB complex plays an important role in the rescue of blocked DNA replication forks via replication fork reversal (RFR). RuvA specifically binds to HJ cruciform DNA, conferring on it an open structure. The RuvB hexamer acts as an ATP-dependent pump, pulling dsDNA into and through the RuvAB complex. HJ branch migration allows RuvC to scan DNA until it finds its consensus sequence, where it cleaves and resolves the cruciform DNA. The polypeptide is Holliday junction branch migration complex subunit RuvA (Clavibacter michiganensis subsp. michiganensis (strain NCPPB 382)).